Here is a 132-residue protein sequence, read N- to C-terminus: Small ribosomal subunit protein uS8 (132 aa).

The protein belongs to the universal ribosomal protein uS8 family. As to quaternary structure, part of the 30S ribosomal subunit. Contacts proteins S5 and S12.

Functionally, one of the primary rRNA binding proteins, it binds directly to 16S rRNA central domain where it helps coordinate assembly of the platform of the 30S subunit. This Corynebacterium efficiens (strain DSM 44549 / YS-314 / AJ 12310 / JCM 11189 / NBRC 100395) protein is Small ribosomal subunit protein uS8.